Consider the following 278-residue polypeptide: 4-deoxy-L-threo-5-hexosulose-uronate ketol-isomerase (278 aa).

Positions 196, 198, 203, and 245 each coordinate Zn(2+).

The protein belongs to the KduI family. In terms of assembly, homohexamer. It depends on Zn(2+) as a cofactor.

The enzyme catalyses 5-dehydro-4-deoxy-D-glucuronate = 3-deoxy-D-glycero-2,5-hexodiulosonate. It participates in glycan metabolism; pectin degradation; 2-dehydro-3-deoxy-D-gluconate from pectin: step 4/5. Functionally, catalyzes the isomerization of 5-dehydro-4-deoxy-D-glucuronate to 3-deoxy-D-glycero-2,5-hexodiulosonate. The sequence is that of 4-deoxy-L-threo-5-hexosulose-uronate ketol-isomerase from Escherichia coli (strain K12 / MC4100 / BW2952).